The primary structure comprises 478 residues: Glutamyl-tRNA reductase (478 aa).

Residues 49-52 (TCNR), Ser109, 114-116 (EQQ), and Gln120 contribute to the substrate site. Cys50 functions as the Nucleophile in the catalytic mechanism. An NADP(+)-binding site is contributed by 191–196 (GAGSMG).

The protein belongs to the glutamyl-tRNA reductase family. As to quaternary structure, homodimer.

The catalysed reaction is (S)-4-amino-5-oxopentanoate + tRNA(Glu) + NADP(+) = L-glutamyl-tRNA(Glu) + NADPH + H(+). The protein operates within porphyrin-containing compound metabolism; protoporphyrin-IX biosynthesis; 5-aminolevulinate from L-glutamyl-tRNA(Glu): step 1/2. Functionally, catalyzes the NADPH-dependent reduction of glutamyl-tRNA(Glu) to glutamate 1-semialdehyde (GSA). The polypeptide is Glutamyl-tRNA reductase (Rhodococcus opacus (strain B4)).